Here is a 347-residue protein sequence, read N- to C-terminus: MRIEEDLKLGFKDVLIRPKRSTLKSRSDVELERQFTFKHSGQTWSGVPIIAANMDTVGTFEMAQALAGFDILTAVHKHYTVEEWAAFINTASADVLKHVMVSTGTSDADFAKTAQILALNPALNFVCIDVANGYSEHFVQFVAKAREAWPTKTICAGNVVTGEMCEELILSGADIVKVGIGPGSVCTTRVKTGVGYPQLSAVIECADAAHGLGGMIVSDGGCTMPGDVAKAFGGGADFVMLGGMLAGHEESGGSVVEENGEKFMLFYGMSSESAMNRHVGGVAKYRAAEGKTVKLPLRGPVGNTARDILGGLRSACTYVGASRLKELTKRTTFIRVQEQENRIFNNL.

An NADP(+)-binding site is contributed by 108–131 (ADFAKTAQILALNPALNFVCIDVA). Gly-181 and Gly-183 together coordinate K(+). The active-site Thioimidate intermediate is Cys-186. 216–239 (IVSDGGCTMPGDVAKAFGGGADFV) provides a ligand contact to NADP(+).

The protein belongs to the IMPDH/GMPR family. GuaC type 1 subfamily. Homotetramer.

It catalyses the reaction IMP + NH4(+) + NADP(+) = GMP + NADPH + 2 H(+). Its function is as follows. Catalyzes the irreversible NADPH-dependent deamination of GMP to IMP. It functions in the conversion of nucleobase, nucleoside and nucleotide derivatives of G to A nucleotides, and in maintaining the intracellular balance of A and G nucleotides. In Salmonella arizonae (strain ATCC BAA-731 / CDC346-86 / RSK2980), this protein is GMP reductase.